The primary structure comprises 934 residues: Diacylglycerol kinase theta (934 aa).

Residues 1-50 (MAAAAEPGARTWPGSGSPRLGSPAGSPVLGISGRTRPGSGPERTSRAIGS) form a disordered region. 2 positions are modified to phosphoserine: Ser-22 and Ser-26. 3 Phorbol-ester/DAG-type zinc fingers span residues 54–102 (GHSF…KTPC), 115–162 (AHCF…CSDC), and 177–228 (HHHW…APEC). Residues 387-486 (TQEILKIYPG…TRFYVAETRA (100 aa)) form the Ras-associating domain. Short sequence motifs (LXXLL motif) lie at residues 547-551 (LYMLA) and 566-570 (LPDVL). The region spanning 576 to 713 (PDCCPLLVFV…MDRWTILLDA (138 aa)) is the DAGKc domain. Basic residues predominate over residues 905–916 (LRKAKQKPRKAG). The disordered stretch occupies residues 905–934 (LRKAKQKPRKAGANRDTRVDTLPAPEGNPL).

This sequence belongs to the eukaryotic diacylglycerol kinase family. In terms of assembly, interacts with RHOA (constitutively activated, GTP-bound); the interaction inhibits DGKQ. Interacts with PRKCE. Interacts with PRKCH. Interacts with PLCB1. Interacts with NR5A1; the interaction requires both LXXLL motifs in DGKQ and is required for full phosphatidic acid-mediated activation of NR5A1. In terms of processing, phosphorylated by PRKCE and PRKCH in vitro. As to expression, widely expressed in all brain regions, including the cortex and hippocampus with a specific expression in neuronal cells (at protein level).

Its subcellular location is the cytoplasm. It is found in the cytosol. The protein localises to the cell membrane. It localises to the synapse. The protein resides in the cytoskeleton. Its subcellular location is the nucleus. It is found in the nucleus speckle. The protein localises to the nucleus matrix. It catalyses the reaction a 1,2-diacyl-sn-glycerol + ATP = a 1,2-diacyl-sn-glycero-3-phosphate + ADP + H(+). The catalysed reaction is a 1-O-alkyl-sn-glycerol + ATP = a 1-O-alkyl-sn-glycero-3-phosphate + ADP + H(+). It carries out the reaction 1-O-alkyl-2-acyl-sn-glycerol + ATP = 1-O-alkyl-2-acyl-sn-glycero-3-phosphate + ADP + H(+). The enzyme catalyses 1,2-di-(9Z-octadecenoyl)-sn-glycerol + ATP = 1,2-di-(9Z-octadecenoyl)-sn-glycero-3-phosphate + ADP + H(+). It catalyses the reaction 1-O-hexadecyl-sn-glycerol + ATP = 1-O-hexadecyl-sn-glycero-3-phosphate + ADP + H(+). The catalysed reaction is 1-O-hexadecyl-2-acetyl-sn-glycerol + ATP = 1-O-hexadecyl-2-acetyl-sn-glycero-3-phosphate + ADP + H(+). It carries out the reaction 1-octadecanoyl-2-(5Z,8Z,11Z,14Z-eicosatetraenoyl)-sn-glycerol + ATP = 1-octadecanoyl-2-(5Z,8Z,11Z,14Z-eicosatetraenoyl)-sn-glycero-3-phosphate + ADP + H(+). It participates in lipid metabolism; glycerolipid metabolism. Its activity is regulated as follows. Activated by phosphatidylserine. In terms of biological role, diacylglycerol kinase that converts diacylglycerol/DAG into phosphatidic acid/phosphatidate/PA and regulates the respective levels of these two bioactive lipids. Thereby, acts as a central switch between the signaling pathways activated by these second messengers with different cellular targets and opposite effects in numerous biological processes. Within the adrenocorticotropic hormone signaling pathway, produces phosphatidic acid which in turn activates NR5A1 and subsequent steroidogenic gene transcription. Also functions downstream of the nerve growth factor signaling pathway being specifically activated in the nucleus by the growth factor. Through its diacylglycerol activity also regulates synaptic vesicle endocytosis. This is Diacylglycerol kinase theta (Dgkq) from Mus musculus (Mouse).